We begin with the raw amino-acid sequence, 255 residues long: Putative OPA3-like protein CG13603 (255 aa).

Residues 108–154 (KENKKNELAQSEKMELTNMLTEMNFRLERQDAQIREMTRVLADLDSR) adopt a coiled-coil conformation. Positions 168–187 (VPFDPDTPDQSASARNPKKF) are disordered. The stretch at 212–241 (DGRNRKAKEALQHLDEVAVQLEQSLGEAAT) forms a coiled coil.

This sequence belongs to the OPA3 family.

This is Putative OPA3-like protein CG13603 from Drosophila melanogaster (Fruit fly).